A 149-amino-acid polypeptide reads, in one-letter code: Large ribosomal subunit protein uL15 (149 aa).

The segment covering 1 to 29 (MVSHLKKTRKLRGHVSHGHGRVGKHRKGG) has biased composition (basic residues). The disordered stretch occupies residues 1–38 (MVSHLKKTRKLRGHVSHGHGRVGKHRKGGCRGGRGKAG).

This sequence belongs to the universal ribosomal protein uL15 family.

This is Large ribosomal subunit protein uL15 (RPL27A) from Tetrahymena thermophila.